Consider the following 311-residue polypeptide: Energy-coupling factor transporter ATP-binding protein EcfA2 (311 aa).

In terms of domain architecture, ABC transporter spans 3 to 265; it reads IKLKDVKFTF…IAFLEENNLQ (263 aa). 40 to 47 contributes to the ATP binding site; it reads GQTGSGKT.

The protein belongs to the ABC transporter superfamily. Energy-coupling factor EcfA family. Forms a stable energy-coupling factor (ECF) transporter complex composed of 2 membrane-embedded substrate-binding proteins (S component), 2 ATP-binding proteins (A component) and 2 transmembrane proteins (T component).

The protein localises to the cell membrane. Its function is as follows. ATP-binding (A) component of a common energy-coupling factor (ECF) ABC-transporter complex. Unlike classic ABC transporters this ECF transporter provides the energy necessary to transport a number of different substrates. This chain is Energy-coupling factor transporter ATP-binding protein EcfA2, found in Mycoplasmopsis synoviae (strain 53) (Mycoplasma synoviae).